The sequence spans 770 residues: Shutoff protein (770 aa).

Disordered regions lie at residues 1–20 (MEED…PNSE) and 30–49 (EEEN…PEDG). Residues 10–19 (DSETLTTPNS) show a composition bias toward polar residues. Residues 248 to 312 (VMDQVLIKRA…AVLVTVELEC (65 aa)) are binding to host EIF4G. The RRM domain maps to 315 to 433 (RFFANPQTLR…ELWTSFDERT (119 aa)). Phosphotyrosine; by host is present on residues tyrosine 332 and tyrosine 647. The segment at 661–770 (LSAAASCRSQ…TATMFTESQP (110 aa)) is disordered. Over residues 726–739 (GGPRGRGGRNHRQR) the composition is skewed to basic residues. Residues 742 to 755 (TIFQKTRSEPTSEN) are compositionally biased toward polar residues.

The protein belongs to the adenoviridae shutoff protein family. Monomer. Interacts with hexon protein; this interaction allows chaperoning and trimerization of hexon proteins. Interacts (via N-terminus) with host initiation factor EIF4G (via C-terminus). Interacts (via RRM domain) with viral mRNAs that contain the tripartite leader; this interaction allows ribosome shunting and expression of viral late mRNAs. In terms of processing, might be cleaved by the viral protease. Post-translationally, phosphorylated. Tyrosine phosphorylation enhances preferential binding to tripartite leader mRNAs and allows ribosome shunting. Methylated. Asymmetric dimethylation by host PRMT1 of the Arg/Gly-rich region may regulate shutoff protein binding to hexon and promote the capsid assembly in the nucleus.

It is found in the host cytoplasm. Functionally, protein that inhibits host translation while promoting late viral translation by ribosome shunting. Blocks host cap-dependent translation by binding to eIF4G, displacing MKNK1 from cap initiation complexes and preventing EIF4E phosphorylation. Binds to the tripartite leader sequence of viral late mRNAs and recruits host eIF4G, PABPC1/poly-A binding protein and 40S ribosomes subunits on viral mRNAs, allowing ribosome shunting and efficient translation of late viral mRNAs even though conventional translation via ribosome scanning from the cap has been shut off in the host cell. During assembly, acts as a chaperone protein that helps hexon proteins assembly into trimers. In Human adenovirus F serotype 40 (HAdV-40), this protein is Shutoff protein.